The chain runs to 123 residues: Large ribosomal subunit protein uL14 (123 aa).

It belongs to the universal ribosomal protein uL14 family. In terms of assembly, part of the 50S ribosomal subunit. Forms a cluster with proteins L3 and L19. In the 70S ribosome, L14 and L19 interact and together make contacts with the 16S rRNA in bridges B5 and B8.

Its function is as follows. Binds to 23S rRNA. Forms part of two intersubunit bridges in the 70S ribosome. In Citrobacter koseri (strain ATCC BAA-895 / CDC 4225-83 / SGSC4696), this protein is Large ribosomal subunit protein uL14.